We begin with the raw amino-acid sequence, 239 residues long: 7-cyano-7-deazaguanine synthase (239 aa).

13-23 (LSGGQDSATCL) contributes to the ATP binding site. Positions 199, 214, 217, and 220 each coordinate Zn(2+).

This sequence belongs to the QueC family. Zn(2+) is required as a cofactor.

It carries out the reaction 7-carboxy-7-deazaguanine + NH4(+) + ATP = 7-cyano-7-deazaguanine + ADP + phosphate + H2O + H(+). Its pathway is purine metabolism; 7-cyano-7-deazaguanine biosynthesis. Functionally, catalyzes the ATP-dependent conversion of 7-carboxy-7-deazaguanine (CDG) to 7-cyano-7-deazaguanine (preQ(0)). This chain is 7-cyano-7-deazaguanine synthase, found in Acidovorax ebreus (strain TPSY) (Diaphorobacter sp. (strain TPSY)).